The following is a 207-amino-acid chain: FMN-dependent NADH:quinone oxidoreductase 3 (207 aa).

FMN-binding positions include Ser10 and Ser16–Ser18.

Belongs to the azoreductase type 1 family. Homodimer. It depends on FMN as a cofactor.

The enzyme catalyses 2 a quinone + NADH + H(+) = 2 a 1,4-benzosemiquinone + NAD(+). It carries out the reaction N,N-dimethyl-1,4-phenylenediamine + anthranilate + 2 NAD(+) = 2-(4-dimethylaminophenyl)diazenylbenzoate + 2 NADH + 2 H(+). Its function is as follows. Quinone reductase that provides resistance to thiol-specific stress caused by electrophilic quinones. Also exhibits azoreductase activity. Catalyzes the reductive cleavage of the azo bond in aromatic azo compounds to the corresponding amines. This chain is FMN-dependent NADH:quinone oxidoreductase 3, found in Burkholderia lata (strain ATCC 17760 / DSM 23089 / LMG 22485 / NCIMB 9086 / R18194 / 383).